A 318-amino-acid chain; its full sequence is MLDTLLPFKRHFLSRNGNKLHYINEGQGEPVVMVHGNPSWSFYYRNLVSALKDTHQCIVPDHIGCGLSDKPDDSGYDYTLKNRIDDLEALLDSLNVKENITLVVHDWGGMIGMGYAARYPERIKRLVILNTGAFHLPDTKPLPLALWICRNTLLGTVLVRGFNAFSSIASYVGVKRQPMSKYIREAYVAPFNSWANRISTLRFVQDIPLKPGDRNYQLVSDIAASLPKFAKVPTLICWGLQDFVFDKHFLVKWREHMPHAQVHEFADCGHYILEDASDEVITHIKHFMTETETLATQVNPADSITEFESASQAPQAER.

The 246-residue stretch at 30–275 folds into the AB hydrolase-1 domain; it reads PVVMVHGNPS…ADCGHYILED (246 aa).

Belongs to the AB hydrolase superfamily.

It carries out the reaction a cis-3-alkyl-4-alkyloxetan-2-one = a cis-alkene + CO2. Functionally, involved in olefin biosynthesis. Catalyzes the elimination of carbon dioxide from beta-lactones to form the final olefin product. The S.oneidensis oleABCD genes produce 3,6,9,12,15,19,22,25,28-hentriacontanonaene, which may aid the cells in adapting to a sudden drop in temperature. This chain is Cis-3-alkyl-4-alkyloxetan-2-one decarboxylase, found in Shewanella oneidensis (strain ATCC 700550 / JCM 31522 / CIP 106686 / LMG 19005 / NCIMB 14063 / MR-1).